Consider the following 122-residue polypeptide: Immunoglobulin lambda variable 8-61 (122 aa).

A signal peptide spans 1–24 (MSVPTMAWMMLLLGLLAYGSGVDS). Residues 25–49 (QTVVTQEPSFSVSPGGTVTLTCGLS) are framework-1. In terms of domain architecture, Ig-like spans 25–122 (QTVVTQEPSF…YCVLYMGSGI (98 aa)). A disulfide bridge connects residues Cys46 and Cys114. The segment at 50–58 (SGSVSTSYY) is complementarity-determining-1. A framework-2 region spans residues 59–75 (PSWYQQTPGQAPRTLIY). Positions 76–78 (STN) are complementarity-determining-2. The tract at residues 79–114 (TRSSGVPDRFSGSILGNKAALTITGAQADDESDYYC) is framework-3. The segment at 115–122 (VLYMGSGI) is complementarity-determining-3.

Immunoglobulins are composed of two identical heavy chains and two identical light chains; disulfide-linked.

Its subcellular location is the secreted. The protein localises to the cell membrane. Its function is as follows. V region of the variable domain of immunoglobulin light chains that participates in the antigen recognition. Immunoglobulins, also known as antibodies, are membrane-bound or secreted glycoproteins produced by B lymphocytes. In the recognition phase of humoral immunity, the membrane-bound immunoglobulins serve as receptors which, upon binding of a specific antigen, trigger the clonal expansion and differentiation of B lymphocytes into immunoglobulins-secreting plasma cells. Secreted immunoglobulins mediate the effector phase of humoral immunity, which results in the elimination of bound antigens. The antigen binding site is formed by the variable domain of one heavy chain, together with that of its associated light chain. Thus, each immunoglobulin has two antigen binding sites with remarkable affinity for a particular antigen. The variable domains are assembled by a process called V-(D)-J rearrangement and can then be subjected to somatic hypermutations which, after exposure to antigen and selection, allow affinity maturation for a particular antigen. The chain is Immunoglobulin lambda variable 8-61 from Homo sapiens (Human).